The primary structure comprises 217 residues: MAAGSRTSLLLAFGLLCLPWLQEGSAFPTIPLSRLFDNAMLRAHRLYQLAYDTYQEFEEAYILKEQKYSFLQNPQTSLCFSESIPTPSNRVKTQQKSNLELLRISLLLIQSWLEPVQLLRSVFANSLVYGASDSNVYRHLKDLEEGIQTLMWRLEDGSPRTGQIFNQSYSKFDTKSHNDDALLKNYGLLYCFRKDMDKVETFLRIVQCRSVEGSCGF.

The N-terminal stretch at 1 to 26 is a signal peptide; that stretch reads MAAGSRTSLLLAFGLLCLPWLQEGSA. Disulfide bonds link cysteine 79/cysteine 191 and cysteine 208/cysteine 215. At serine 132 the chain carries Phosphoserine. N-linked (GlcNAc...) asparagine glycosylation occurs at asparagine 166. Position 176 is a phosphoserine (serine 176).

It belongs to the somatotropin/prolactin family. Expressed in the placenta.

It is found in the secreted. In terms of biological role, plays an important role in growth control. Its major role in stimulating body growth is to stimulate the liver and other tissues to secrete IGF1. It stimulates both the differentiation and proliferation of myoblasts. It also stimulates amino acid uptake and protein synthesis in muscle and other tissues. The polypeptide is Growth hormone variant (GH2) (Pan troglodytes (Chimpanzee)).